The sequence spans 647 residues: MSDEVFSTTLAYTKSPKVTKRTTFQDELIRAITARSARQRSSEYSDDFDSDEIVSLGDFSDTSADENSVNKKMNDFHISDDEEKNPSKLLFLKTNKSNGNITKDEPVCAIKNEEEMAPDGCEDIVVKSFSESQNKDEEFEKDKIKMKPKPRILSIKSTSSAENNSLDTDDHFKPSPRPRSMLKKKSHMEEKDGLEDKETALSEELELHSAPSSLPTPNGIQLEAEKKAFSENLDPEDSCLTSLASSSLKQILGDSFSPGSEGNASGKDPNEEITENHNSLKSDENKENSFSADHVTTAVEKSKESQVTADDLEEEKAKAELIMDDDRTVDPLLSKSQSILISTSATASSKKTIEDRNIKNKKSTNNRASSASARLMTSEFLKKSSSKRRTPSTTTSSHYLGTLKVLDQKPSQKQSIEPDRADNIRAAVYQEWLEKKNVYLHEMHRIKRIESENLRIQNEQKKAAKREEALASFEAWKAMKEKEAKKIAAKKRLEEKNKKKTEEENAARKGEALQAFEKWKEKKMEYLKEKNRKEREYERAKKQKEEETVAEKKKDNLTAVEKWNEKKEAFFKQKEKEKINEKRKEELKRAEKKDKDKQAINEYEKWLENKEKQERIERKQKKRHSFLESEALPPWSPPSRTVFAKVF.

Residue S2 is modified to N-acetylserine. Y12 is subject to Phosphotyrosine. Disordered stretches follow at residues 127–323, 344–421, 491–514, 530–553, 580–600, and 613–647; these read KSFS…ELIM, SATA…PDRA, KRLEEKNKKKTEEENAARKGEALQ, KNRKEREYERAKKQKEEETVAEKK, NEKRKEELKRAEKKDKDKQAI, and QERIERKQKKRHSFLESEALPPWSPPSRTVFAKVF. Residues 133–145 show a composition bias toward basic and acidic residues; sequence QNKDEEFEKDKIK. The segment covering 155 to 166 has biased composition (polar residues); it reads IKSTSSAENNSL. Over residues 174-186 the composition is skewed to basic residues; that stretch reads PSPRPRSMLKKKS. Residues 184-210 adopt a coiled-coil conformation; that stretch reads KKSHMEEKDGLEDKETALSEELELHSA. Over residues 187–200 the composition is skewed to basic and acidic residues; the sequence is HMEEKDGLEDKETA. Composition is skewed to polar residues over residues 210–219 and 239–249; these read APSSLPTPNG and CLTSLASSSLK. The segment covering 268–287 has biased composition (basic and acidic residues); it reads DPNEEITENHNSLKSDENKE. Positions 298-328 form a coiled coil; sequence AVEKSKESQVTADDLEEEKAKAELIMDDDRT. Residues 365–374 are compositionally biased toward low complexity; that stretch reads NNRASSASAR. Residues 443–628 are a coiled coil; that stretch reads MHRIKRIESE…KQKKRHSFLE (186 aa).

Binds to purified microtubules via its C-terminus.

The protein resides in the cytoplasm. Its subcellular location is the cytoskeleton. The protein localises to the spindle. In terms of biological role, involved in organization of the bipolar mitotic spindle. Required for bipolar spindle assembly, mitosis progression and cytokinesis. May act by stabilizing interphase microtubules. The chain is Microtubule-associated protein 9 (MAP9) from Homo sapiens (Human).